Consider the following 599-residue polypeptide: Adenine deaminase (599 aa).

The protein belongs to the metallo-dependent hydrolases superfamily. Adenine deaminase family. The cofactor is Mn(2+).

The enzyme catalyses adenine + H2O + H(+) = hypoxanthine + NH4(+). The polypeptide is Adenine deaminase (Clostridium botulinum (strain ATCC 19397 / Type A)).